The chain runs to 377 residues: Guanine nucleotide-binding protein subunit alpha-13 (377 aa).

Residues Cys-14 and Cys-18 are each lipidated (S-palmitoyl cysteine). Positions 47-377 (RLVKILLLGA…HDNLKQLMLQ (331 aa)) constitute a G-alpha domain. The interval 50–63 (KILLLGAGESGKST) is G1 motif. GTP is bound by residues 58-63 (ESGKST), Ser-173, and 197-200 (LLAR). Ser-62 serves as a coordination point for Mg(2+). Residues 195-203 (DILLARRPT) form a G2 motif region. Thr-203 contacts Mg(2+). Residue Thr-203 is modified to Phosphothreonine; by PKA. The segment at 218-227 (FKMVDVGGQR) is G3 motif. Positions 287-294 (ILFLNKTD) are G4 motif. GTP is bound by residues 291–294 (NKTD) and Ala-349. The segment at 347–352 (TTAINT) is G5 motif.

Belongs to the G-alpha family. G(12) subfamily. G proteins are composed of 3 units; alpha, beta and gamma. The alpha chain contains the guanine nucleotide binding site. Interacts with UBXD5. Interacts with HAX1. Interacts (in GTP-bound form) with PPP5C (via TPR repeats); activates PPP5C phosphatase activity and translocates PPP5C to the cell membrane. Interacts with RGS22. Interacts (in GTP-bound form) with ARHGEF1. Interacts (in GTP-bound form) with ARHGEF11 (via RGS domain). Interacts (in GTP-bound form) with ARHGEF12 (via RGS domain). Interacts with CTNND1. Interacts with GASL2L2. Interacts with GPR35. Interacts with GPR174. Post-translationally, palmitoylation is critical for proper membrane localization and signaling. Phosphorylation on Thr-203 by PKA destabilizes the heterotrimer of alpha, beta and gamma, and inhibits Rho activation. As to expression, expressed in testis, including in Leydig cells and in the seminiferous epithelium, in differentiating cells from the spermatogonia to mature spermatozoa stages and round spermatids (at protein level). Expressed in 99.2% of spermatozoa from healthy individuals, but only in 28.6% of macrocephalic spermatozoa from infertile patients (at protein level).

It is found in the cell membrane. It localises to the melanosome. Its subcellular location is the cytoplasm. The protein resides in the nucleus. In terms of biological role, guanine nucleotide-binding proteins (G proteins) are involved as modulators or transducers in various transmembrane signaling systems. Activates effector molecule RhoA by binding and activating RhoGEFs (ARHGEF1/p115RhoGEF, ARHGEF11/PDZ-RhoGEF and ARHGEF12/LARG). GNA13-dependent Rho signaling subsequently regulates transcription factor AP-1 (activating protein-1). Promotes tumor cell invasion and metastasis by activating RhoA/ROCK signaling pathway. Inhibits CDH1-mediated cell adhesion in a process independent from Rho activation. In lymphoid follicles, transmits P2RY8- and S1PR2-dependent signals that lead to inhibition of germinal center (GC) B cell growth and migration outside the GC niche. This chain is Guanine nucleotide-binding protein subunit alpha-13 (GNA13), found in Homo sapiens (Human).